A 419-amino-acid chain; its full sequence is Dual specificity mitogen-activated protein kinase kinase 7 (419 aa).

Residue alanine 2 is modified to N-acetylalanine. Residues 2-30 (AASSLEQKLSRLEAKLKQENREARRRIDL) adopt a coiled-coil conformation. Residues 18-30 (KQENREARRRIDL) are compositionally biased toward basic and acidic residues. Positions 18–76 (KQENREARRRIDLNLDISPQRPRPTLQLPLANDGGSRSPSSESSPQHPTPPARPRHMLG) are disordered. The span at 36–63 (PQRPRPTLQLPLANDGGSRSPSSESSPQ) shows a compositional bias: low complexity. Positions 37–57 (QRPRPTLQLPLANDGGSRSPS) are d domain. The 261-residue stretch at 120–380 (LENLGEMGSG…YNKLLEHSFI (261 aa)) folds into the Protein kinase domain. ATP-binding positions include 126 to 134 (MGSGTCGQV) and lysine 149. Aspartate 243 (proton acceptor) is an active-site residue. Phosphoserine; by MAP3K is present on serine 271. Threonine 275 bears the Phosphothreonine; by MAP3K mark. Residues 377 to 400 (HSFIKRYETLEVDVASWFKDVMAK) form a DVD domain region. Serine 411 bears the Phosphoserine mark.

It belongs to the protein kinase superfamily. STE Ser/Thr protein kinase family. MAP kinase kinase subfamily. As to quaternary structure, interacts with isoform 1 of VRK2. Interacts (via its D domain) with its substrates MAPK8/JNK1, MAPK9/JNK2 and MAPK10/JNK3. Interacts (via its DVD domain) with MAP3Ks activators like MAP3K5/ASK1 and MAP3K1/MEKK1. Interacts with MAPK8IP1/JIP1, MAPK8IP2/JIP2 and MAPK8IP3/JIP3 scaffold proteins. Interacts with RASSF7, the interaction promotes phosphorylation. Found in a complex with SH3RF1, RAC1, MAP3K11/MLK3, MAPK8IP1/JIP1 and MAPK8/JNK1. Found in a complex with SH3RF1, RAC2, MAP3K7/TAK1, MAPK8IP1/JIP1, MAPK8/JNK1 and MAPK9/JNK2. Mg(2+) is required as a cofactor. In terms of processing, activated by phosphorylation on Ser-271 and Thr-275 by MAP kinase kinase kinases (MAP3Ks). As to expression, ubiquitous; with highest level of expression in skeletal muscle. Isoform 3 is found at low levels in placenta, fetal liver, and skeletal muscle.

It localises to the nucleus. Its subcellular location is the cytoplasm. It carries out the reaction L-seryl-[protein] + ATP = O-phospho-L-seryl-[protein] + ADP + H(+). The enzyme catalyses L-threonyl-[protein] + ATP = O-phospho-L-threonyl-[protein] + ADP + H(+). It catalyses the reaction L-tyrosyl-[protein] + ATP = O-phospho-L-tyrosyl-[protein] + ADP + H(+). Its activity is regulated as follows. Activated by phosphorylation by specific MAP kinase kinase kinases such as MAP3K1/MEKK1, MAP3K3/MEKK3, MAP3K11/MLK3 and MAP3K12/DLK. Its function is as follows. Dual specificity protein kinase which acts as an essential component of the MAP kinase signal transduction pathway. Essential component of the stress-activated protein kinase/c-Jun N-terminal kinase (SAP/JNK) signaling pathway. With MAP2K4/MKK4, is the one of the only known kinase to directly activate the stress-activated protein kinase/c-Jun N-terminal kinases MAPK8/JNK1, MAPK9/JNK2 and MAPK10/JNK3. MAP2K4/MKK4 and MAP2K7/MKK7 both activate the JNKs by phosphorylation, but they differ in their preference for the phosphorylation site in the Thr-Pro-Tyr motif. MAP2K4/MKK4 shows preference for phosphorylation of the Tyr residue and MAP2K7/MKK7 for the Thr residue. The monophosphorylation of JNKs on the Thr residue is sufficient to increase JNK activity indicating that MAP2K7/MKK7 is important to trigger JNK activity, while the additional phosphorylation of the Tyr residue by MAP2K4/MKK4 ensures optimal JNK activation. Has a specific role in JNK signal transduction pathway activated by pro-inflammatory cytokines. The MKK/JNK signaling pathway is also involved in mitochondrial death signaling pathway, including the release cytochrome c, leading to apoptosis. Part of a non-canonical MAPK signaling pathway, composed of the upstream MAP3K12 kinase and downstream MAP kinases MAPK1/ERK2 and MAPK3/ERK1, that enhances the AP-1-mediated transcription of APP in response to APOE. The sequence is that of Dual specificity mitogen-activated protein kinase kinase 7 (MAP2K7) from Homo sapiens (Human).